A 204-amino-acid chain; its full sequence is Twist-related protein 1 (204 aa).

Low complexity predominate over residues 1 to 18; sequence MMQDVSSSPVSPADDSLS. Residues 1-107 are disordered; it reads MMQDVSSSPV…GGGSPQSYEE (107 aa). Basic residues predominate over residues 34-43; sequence RGGRKRRSSR. 2 stretches are compositionally biased toward gly residues: residues 46–65 and 80–101; these read AGGG…GGDE and GCGG…GGGS. Residues 110–161 enclose the bHLH domain; that stretch reads TQRVMANVRERQRTQSLNEAFAALRKIIPTLPSDKLSKIQTLKLAARYIDFL. Residues 163 to 193 form a sufficient for transactivation activity region; the sequence is QVLQSDELDSKMASCSYVAHERFSYAFSVWR.

Efficient DNA binding requires dimerization with another bHLH protein. Homodimer or heterodimer with E proteins such as TCF3. ID1 binds preferentially to TCF3 but does not interact efficiently with TWIST1 so ID1 levels control the amount of TCF3 available to dimerize with TWIST and thus determine the type of dimer formed.

The protein localises to the nucleus. Its function is as follows. Acts as a transcriptional regulator. Inhibits myogenesis by sequestrating E proteins, inhibiting trans-activation by MEF2, and inhibiting DNA-binding by MYOD1 through physical interaction. This interaction probably involves the basic domains of both proteins. Also represses expression of pro-inflammatory cytokines such as TNFA and IL1B. Regulates cranial suture patterning and fusion. Activates transcription as a heterodimer with E proteins. Regulates gene expression differentially, depending on dimer composition. Homodimers induce expression of FGFR2 and POSTN while heterodimers repress FGFR2 and POSTN expression and induce THBS1 expression. Heterodimerization is also required for osteoblast differentiation. Represses the activity of the circadian transcriptional activator: NPAS2-BMAL1 heterodimer. The sequence is that of Twist-related protein 1 (TWIST1) from Nomascus concolor (Black crested gibbon).